The sequence spans 623 residues: ATP-dependent lipid A-core flippase (623 aa).

Transmembrane regions (helical) follow at residues 66 to 86, 103 to 123, 190 to 210, 290 to 310, and 317 to 337; these read LVLA…LAVI, VWFL…CNFF, LVVI…TLII, LTPL…AVAL, and ALTV…FDPI. The 283-residue stretch at 67 to 349 folds into the ABC transmembrane type-1 domain; sequence VLAVLLMAGA…LTNLAGKMQK (283 aa). The region spanning 382–618 is the ABC transporter domain; it reads VEFRAVSHRF…NGLYASLYNM (237 aa). Residue 416–423 participates in ATP binding; sequence GRSGSGKT.

This sequence belongs to the ABC transporter superfamily. Lipid exporter (TC 3.A.1.106) family. As to quaternary structure, homodimer.

It is found in the cell inner membrane. It carries out the reaction ATP + H2O + lipid A-core oligosaccharideSide 1 = ADP + phosphate + lipid A-core oligosaccharideSide 2.. Its function is as follows. Involved in lipopolysaccharide (LPS) biosynthesis. Translocates lipid A-core from the inner to the outer leaflet of the inner membrane. Transmembrane domains (TMD) form a pore in the inner membrane and the ATP-binding domain (NBD) is responsible for energy generation. This chain is ATP-dependent lipid A-core flippase, found in Bordetella pertussis (strain Tohama I / ATCC BAA-589 / NCTC 13251).